The primary structure comprises 802 residues: Outer membrane usher protein PefC (802 aa).

Positions 1-24 (MSFHHRVFKLSALSLALFSHLSFA) are cleaved as a signal peptide. Cysteine 782 and cysteine 801 form a disulfide bridge.

The protein belongs to the fimbrial export usher family.

The protein resides in the cell outer membrane. In terms of biological role, involved in the export and assembly of FimA fimbrial subunits across the outer membrane. This Salmonella typhimurium (strain LT2 / SGSC1412 / ATCC 700720) protein is Outer membrane usher protein PefC (pefC).